Here is a 235-residue protein sequence, read N- to C-terminus: Small ribosomal subunit protein eS4 (235 aa).

The S4 RNA-binding domain maps to 37–110 (LPLGLIIRDV…KGRLVLYKLN (74 aa)).

This sequence belongs to the eukaryotic ribosomal protein eS4 family.

The sequence is that of Small ribosomal subunit protein eS4 from Methanosarcina mazei (strain ATCC BAA-159 / DSM 3647 / Goe1 / Go1 / JCM 11833 / OCM 88) (Methanosarcina frisia).